Here is a 177-residue protein sequence, read N- to C-terminus: Ribonuclease M5 (177 aa).

One can recognise a Toprim domain in the interval 5–99 (KQIIIVEGKT…NKTSKKIGIA (95 aa)). Residues glutamate 11, aspartate 59, and aspartate 61 each coordinate Mg(2+).

The protein belongs to the ribonuclease M5 family. Mg(2+) serves as cofactor.

It is found in the cytoplasm. It carries out the reaction Endonucleolytic cleavage of RNA, removing 21 and 42 nucleotides, respectively, from the 5'- and 3'-termini of a 5S-rRNA precursor.. Functionally, required for correct processing of both the 5' and 3' ends of 5S rRNA precursor. Cleaves both sides of a double-stranded region yielding mature 5S rRNA in one step. The polypeptide is Ribonuclease M5 (Mycoplasma mycoides subsp. mycoides SC (strain CCUG 32753 / NCTC 10114 / PG1)).